The sequence spans 322 residues: CXXC-type zinc finger protein 5 (322 aa).

Residues 1 to 10 (MSSLGGGSQD) show a composition bias toward gly residues. A disordered region spans residues 1–100 (MSSLGGGSQD…SGGGSMMGGE (100 aa)). Composition is skewed to low complexity over residues 11-20 (AGGSSSSSTN) and 28-52 (SGPK…VADD). A Phosphothreonine modification is found at threonine 53. Over residues 87 to 97 (SSGGSGGGSMM) the composition is skewed to gly residues. The segment at 256–297 (GKKKRKRCGMCAPCRRRINCEQCSSCRNRKTGHQICKFRKCE) adopts a CXXC-type zinc-finger fold. The Nuclear localization signal signature appears at 257–262 (KKKRKR). 8 residues coordinate Zn(2+): cysteine 263, cysteine 266, cysteine 269, cysteine 275, cysteine 278, cysteine 281, cysteine 291, and cysteine 296.

As to quaternary structure, interacts with DVL1. Interacts with RBPJ.

The protein localises to the nucleus. It localises to the cytoplasm. May indirectly participate in activation of the NF-kappa-B and MAPK pathways. Acts as a mediator of BMP4-mediated modulation of canonical Wnt signaling activity in neural stem cells. Required for DNA damage-induced ATM phosphorylation, p53 activation and cell cycle arrest. Involved in myelopoiesis. Binds to the oxygen responsive element of COX4I2 and represses its transcription under hypoxia conditions (4% oxygen), as well as normoxia conditions (20% oxygen). May repress COX4I2 transactivation induced by CHCHD2 and RBPJ. Binds preferentially to DNA containing cytidine-phosphate-guanosine (CpG) dinucleotides over CpH (H=A, T, and C), hemimethylated-CpG and hemimethylated-hydroxymethyl-CpG. The protein is CXXC-type zinc finger protein 5 (CXXC5) of Pongo abelii (Sumatran orangutan).